A 512-amino-acid polypeptide reads, in one-letter code: Sodium/proline symporter (512 aa).

Helical transmembrane passes span 16-36 (WQTY…GFYG), 54-74 (IGPY…WMIM), 85-105 (LSAM…YFVV), 139-159 (IISG…GFVS), 174-194 (FGLI…GYLA), 200-220 (FFQG…AMMN), 247-267 (IGII…HIII), 286-306 (ISWM…GIAF), 327-347 (VLFH…AIMS), 381-401 (FVMI…AIAW), 410-430 (LVGN…LFAL), 438-458 (AGAV…IAWI), and 467-487 (IFGL…TYVV).

It belongs to the sodium:solute symporter (SSF) (TC 2.A.21) family.

It is found in the cell membrane. It catalyses the reaction L-proline(in) + Na(+)(in) = L-proline(out) + Na(+)(out). In terms of biological role, catalyzes the sodium-dependent uptake of extracellular L-proline. Since most S.aureus strains are L-proline auxotrophs, this transporter may aid the bacterial persistence during an infection of tissues with low proline concentrations. This Staphylococcus aureus (strain USA300) protein is Sodium/proline symporter (putP).